The primary structure comprises 512 residues: MKQQKRLYARLLTLLFALIFLLPHSAAAAANLNGTLMQYFEWYMPNDGQHWKRLQNDSAYLAEHGITAVWIPPAYKGTSQADVGYGAYDLYDLGEFHQKGTVRTKYGTKGELQSAIKSLHSRDINVYGDVVINHKGGADATEDVTAVEVDPADRNRVISGEHRIKAWTHFHFPGRGSTYSDFKWHWYHFDGTDWDESRKLNRIYKFQGKAWDWEVSNENGNYDYLMYADIDYDHPDVAAEIKRWGTWYANELQLDGFRLDAVKHIKFSFLRDWVNHVREKTGKEMFTVAEYWQNDLGALENYLNKTNFNHSVFDVPLHYQFHAASTQGGGYDMRKLLNSTVVSKHPLKAVTFVDNHDTQPGQSLESTVQTWFKPLAYAFILTRESGYPQVFYGDMYGTKGDSQREIPALKHKIEPILKARKQYAYGAQHDYFDHHDIVGWTREGDSSVANSGLAALITDGPGGAKRMYVGRQNAGETWHDITGNRSEPVVINSEGWGEFHVNGGSVSIYVQR.

A signal peptide spans 1 to 29; sequence MKQQKRLYARLLTLLFALIFLLPHSAAAA. Asn133, Asp190, Ala210, Asp212, Asp223, Asp229, Asp231, and Asp233 together coordinate Ca(2+). Asp190 contacts Na(+). Residues Asp212, Asp223, and Asp229 each coordinate Na(+). Asp260 acts as the Nucleophile in catalysis. His264 contributes to the Ca(2+) binding site. The active-site Proton donor is Glu290. Ca(2+)-binding residues include Gly329, Tyr331, His435, Asp436, and Asp459.

The protein belongs to the glycosyl hydrolase 13 family. As to quaternary structure, monomer. Ca(2+) is required as a cofactor. The cofactor is Na(+).

The protein localises to the secreted. It carries out the reaction Endohydrolysis of (1-&gt;4)-alpha-D-glucosidic linkages in polysaccharides containing three or more (1-&gt;4)-alpha-linked D-glucose units.. The sequence is that of Alpha-amylase (amyS) from Bacillus licheniformis.